The primary structure comprises 197 residues: Na(+)-translocating NADH-quinone reductase subunit E (197 aa).

The next 6 membrane-spanning stretches (helical) occupy residues 11-31, 35-55, 76-96, 108-128, 139-159, and 175-195; these read SVFIENMALSFFLGMCTFLAV, VSTAFGLGVAVIFVLGLSVPA, FLKFITFIGVIAALVQILEMF, LGIYLPLITVNCAIFGAVSFM, VVYGFGAGLGWMLAIVALAGI, and LGITFIAAGLMAMAFMSFSGI.

Belongs to the NqrDE/RnfAE family. In terms of assembly, composed of six subunits; NqrA, NqrB, NqrC, NqrD, NqrE and NqrF.

The protein resides in the cell inner membrane. The catalysed reaction is a ubiquinone + n Na(+)(in) + NADH + H(+) = a ubiquinol + n Na(+)(out) + NAD(+). In terms of biological role, NQR complex catalyzes the reduction of ubiquinone-1 to ubiquinol by two successive reactions, coupled with the transport of Na(+) ions from the cytoplasm to the periplasm. NqrA to NqrE are probably involved in the second step, the conversion of ubisemiquinone to ubiquinol. This Neisseria gonorrhoeae (strain ATCC 700825 / FA 1090) protein is Na(+)-translocating NADH-quinone reductase subunit E.